A 579-amino-acid polypeptide reads, in one-letter code: GPI alpha-1,2-mannosyltransferase 4 (579 aa).

The next 8 membrane-spanning stretches (helical) occupy residues 131 to 151 (LLLT…APPM), 156 to 173 (WNAL…VFYT), 180 to 200 (IEGL…TWGP), 216 to 236 (LGGI…FAVV), 258 to 278 (ALVL…TDSW), 369 to 389 (YLLL…HQEA), 391 to 411 (FLIP…QPVP), and 416 to 436 (VVLF…GGLV).

This sequence belongs to the glycosyltransferase 22 family. PIGZ subfamily. In terms of tissue distribution, widely expressed at low level, with highest level in brain and colon.

Its subcellular location is the endoplasmic reticulum membrane. It participates in glycolipid biosynthesis; glycosylphosphatidylinositol-anchor biosynthesis. Functionally, alpha-1,2-mannosyltransferase that catalyzes the transfer of the fourth mannose, via an alpha-1,2 bond, from a dolichol-phosphate-mannose (Dol-P-Man) to an alpha-D-Man-(1-&gt;2)-alpha-D-Man-(1-&gt;6)-2-PEtn-alpha-D-Man-(1-&gt;4)-alpha-D-GlcN-(1-&gt;6)-(1-radyl,2-acyl-sn-glycero-3-phospho)-2-acyl-inositol (also termed H6) intermediate and participates in the twelfth step of the glycosylphosphatidylinositol-anchor biosynthesis. The presence of a fourth mannose in GPI is facultative, suggesting that it only exists in some tissues. The protein is GPI alpha-1,2-mannosyltransferase 4 of Homo sapiens (Human).